The chain runs to 258 residues: Ubiquinone/menaquinone biosynthesis C-methyltransferase UbiE (258 aa).

S-adenosyl-L-methionine is bound by residues T81, D102, and N130 to A131.

The protein belongs to the class I-like SAM-binding methyltransferase superfamily. MenG/UbiE family.

It catalyses the reaction a 2-demethylmenaquinol + S-adenosyl-L-methionine = a menaquinol + S-adenosyl-L-homocysteine + H(+). It carries out the reaction a 2-methoxy-6-(all-trans-polyprenyl)benzene-1,4-diol + S-adenosyl-L-methionine = a 5-methoxy-2-methyl-3-(all-trans-polyprenyl)benzene-1,4-diol + S-adenosyl-L-homocysteine + H(+). The protein operates within quinol/quinone metabolism; menaquinone biosynthesis; menaquinol from 1,4-dihydroxy-2-naphthoate: step 2/2. It participates in cofactor biosynthesis; ubiquinone biosynthesis. Its function is as follows. Methyltransferase required for the conversion of demethylmenaquinol (DMKH2) to menaquinol (MKH2) and the conversion of 2-polyprenyl-6-methoxy-1,4-benzoquinol (DDMQH2) to 2-polyprenyl-3-methyl-6-methoxy-1,4-benzoquinol (DMQH2). This Rhizobium rhizogenes (strain K84 / ATCC BAA-868) (Agrobacterium radiobacter) protein is Ubiquinone/menaquinone biosynthesis C-methyltransferase UbiE.